The primary structure comprises 212 residues: Cytidylate kinase (212 aa).

An ATP-binding site is contributed by 7–15 (GPAASGKGT).

It belongs to the cytidylate kinase family. Type 1 subfamily.

The protein resides in the cytoplasm. It catalyses the reaction CMP + ATP = CDP + ADP. The enzyme catalyses dCMP + ATP = dCDP + ADP. The sequence is that of Cytidylate kinase from Bradyrhizobium sp. (strain ORS 278).